Consider the following 768-residue polypeptide: Photosystem I P700 chlorophyll a apoprotein A1 (768 aa).

The next 8 membrane-spanning stretches (helical) occupy residues 76 to 99 (VFSA…FHGA), 162 to 185 (LMAL…YHYH), 201 to 225 (LNHH…HIGA), 310 to 328 (ISHH…GHLY), 369 to 392 (WHAQ…HHMY), 408 to 434 (LGLF…IAMI), 456 to 478 (ALIS…LYIH), and 559 to 577 (FMIH…LILL). C601 and C610 together coordinate [4Fe-4S] cluster. 2 helical membrane-spanning segments follow: residues 617–638 (HVFL…HFSW) and 682–704 (ISMY…MFLF). H693 is a divinylchlorophyll a' binding site. Residues M701 and Y709 each coordinate divinyl chlorophyll a. Position 710 (W710) interacts with phylloquinone. Residues 742–762 (AVGAAHFLLGGIATTWAFFHA) traverse the membrane as a helical segment.

It belongs to the PsaA/PsaB family. In terms of assembly, the PsaA/B heterodimer binds the P700 divinyl chlorophyll special pair and subsequent electron acceptors. PSI consists of a core antenna complex that captures photons, and an electron transfer chain that converts photonic excitation into a charge separation. The cyanobacterial PSI reaction center is composed of one copy each of PsaA,B,C,D,E,F,I,J,K,L,M and X, and forms trimeric complexes. Requires PSI electron transfer chain: 5 divinyl chlorophyll a, 1 divinyl chlorophyll a', 2 phylloquinones and 3 4Fe-4S clusters. PSI core antenna: 90 divinyl chlorophyll a, 22 carotenoids, 3 phospholipids and 1 galactolipid. P700 is a divinyl chlorophyll a/divinyl chlorophyll a' dimer, A0 is one or more divinyl chlorophyll a, A1 is one or both phylloquinones and FX is a shared 4Fe-4S iron-sulfur center. as cofactor.

Its subcellular location is the cellular thylakoid membrane. It carries out the reaction reduced [plastocyanin] + hnu + oxidized [2Fe-2S]-[ferredoxin] = oxidized [plastocyanin] + reduced [2Fe-2S]-[ferredoxin]. PsaA and PsaB bind P700, the primary electron donor of photosystem I (PSI), as well as the electron acceptors A0, A1 and FX. PSI is a plastocyanin/cytochrome c6-ferredoxin oxidoreductase, converting photonic excitation into a charge separation, which transfers an electron from the donor P700 chlorophyll pair to the spectroscopically characterized acceptors A0, A1, FX, FA and FB in turn. Oxidized P700 is reduced on the lumenal side of the thylakoid membrane by plastocyanin or cytochrome c6. The chain is Photosystem I P700 chlorophyll a apoprotein A1 from Prochlorococcus marinus (strain NATL1A).